A 1204-amino-acid chain; its full sequence is ATP-dependent helicase/nuclease subunit A (1204 aa).

One can recognise a UvrD-like helicase ATP-binding domain in the interval 2–469 (TKFTKEQNQA…IVLSDNFRST (468 aa)). 23 to 30 (ASAGSGKT) serves as a coordination point for ATP. The UvrD-like helicase C-terminal domain maps to 496–784 (EGQLQFGATY…KLMTIHASKG (289 aa)).

The protein belongs to the helicase family. AddA subfamily. As to quaternary structure, heterodimer of AddA and AddB/RexB. Mg(2+) serves as cofactor.

It catalyses the reaction Couples ATP hydrolysis with the unwinding of duplex DNA by translocating in the 3'-5' direction.. The catalysed reaction is ATP + H2O = ADP + phosphate + H(+). The heterodimer acts as both an ATP-dependent DNA helicase and an ATP-dependent, dual-direction single-stranded exonuclease. Recognizes the chi site generating a DNA molecule suitable for the initiation of homologous recombination. The AddA nuclease domain is required for chi fragment generation; this subunit has the helicase and 3' -&gt; 5' nuclease activities. This is ATP-dependent helicase/nuclease subunit A from Lactobacillus johnsonii (strain CNCM I-12250 / La1 / NCC 533).